Consider the following 133-residue polypeptide: Ribosome-binding factor A (133 aa).

It belongs to the RbfA family. Monomer. Binds 30S ribosomal subunits, but not 50S ribosomal subunits or 70S ribosomes.

It is found in the cytoplasm. Functionally, one of several proteins that assist in the late maturation steps of the functional core of the 30S ribosomal subunit. Associates with free 30S ribosomal subunits (but not with 30S subunits that are part of 70S ribosomes or polysomes). Required for efficient processing of 16S rRNA. May interact with the 5'-terminal helix region of 16S rRNA. The chain is Ribosome-binding factor A from Citrobacter koseri (strain ATCC BAA-895 / CDC 4225-83 / SGSC4696).